We begin with the raw amino-acid sequence, 545 residues long: MAAKDVKFGNDARVKMLRGVNVLADAVKVTLGPKGRNVVLDKSFGAPVITKDGVSVAREIELEDKFENMGAQMVKEVASKANDAAGDGTTTATVLAQSIVNEGLKAVAAGMNPMDLKRGIDKAVIAAVEELKKLSVPCSDSKAIAQVGTISANADETVGTLIAEAMAKVGKEGVITVEEGSGLQDELDVVEGMQFDRGYLSPYFVNKPETGAVELESPFILLADKKISNIREMLPVLEAVAKAGKPLLIIAEDVEGEALATLVVNTMRGIVKIAAVKAPGFGDRRKAMLRDIAILTAGTVISEEIGLELEKATLEDMGQAKRVVITKDTTTIIDGEGDKALIDSRVTQINQQRDEATSDYDREKLQERVAKLAGGVAVIKVGAATEVEMKEKKARVEDALHATRAAVEEGVVAGGGVALIRVANRIAELRGDNEDQNVGIKVARRAMEAPLRQIVANAGEEPSVIANKVKAGEGNTGYNAATEEYGNMIDMGILDPTKVTRSALQYAASIAGLMITTECMVTDLPKEDKPDLGGAGGMGGMGGMM.

Residues 30-33 (TLGP), Lys51, 87-91 (DGTTT), Gly415, 479-481 (NAA), and Asp495 each bind ATP. Positions 526–545 (KEDKPDLGGAGGMGGMGGMM) are disordered. A compositionally biased stretch (gly residues) spans 533 to 545 (GGAGGMGGMGGMM).

The protein belongs to the chaperonin (HSP60) family. In terms of assembly, forms a cylinder of 14 subunits composed of two heptameric rings stacked back-to-back. Interacts with the co-chaperonin GroES.

It localises to the cytoplasm. The catalysed reaction is ATP + H2O + a folded polypeptide = ADP + phosphate + an unfolded polypeptide.. Its function is as follows. Together with its co-chaperonin GroES, plays an essential role in assisting protein folding. The GroEL-GroES system forms a nano-cage that allows encapsulation of the non-native substrate proteins and provides a physical environment optimized to promote and accelerate protein folding. This chain is Chaperonin GroEL, found in Sodalis glossinidius.